Here is a 384-residue protein sequence, read N- to C-terminus: 1-deoxy-D-xylulose 5-phosphate reductoisomerase (384 aa).

The NADPH site is built by Thr-10, Gly-11, Ser-12, Ile-13, Gly-36, Lys-37, Asn-38, and Asn-121. Residue Lys-122 coordinates 1-deoxy-D-xylulose 5-phosphate. Glu-123 is a binding site for NADPH. Asp-147 lines the Mn(2+) pocket. Positions 148, 149, 173, and 196 each coordinate 1-deoxy-D-xylulose 5-phosphate. Position 149 (Glu-149) interacts with Mn(2+). Gly-202 is a binding site for NADPH. 1-deoxy-D-xylulose 5-phosphate is bound by residues Ser-209, Asn-214, Lys-215, and Glu-218. Residue Glu-218 participates in Mn(2+) binding.

This sequence belongs to the DXR family. It depends on Mg(2+) as a cofactor. The cofactor is Mn(2+).

It catalyses the reaction 2-C-methyl-D-erythritol 4-phosphate + NADP(+) = 1-deoxy-D-xylulose 5-phosphate + NADPH + H(+). It participates in isoprenoid biosynthesis; isopentenyl diphosphate biosynthesis via DXP pathway; isopentenyl diphosphate from 1-deoxy-D-xylulose 5-phosphate: step 1/6. Catalyzes the NADPH-dependent rearrangement and reduction of 1-deoxy-D-xylulose-5-phosphate (DXP) to 2-C-methyl-D-erythritol 4-phosphate (MEP). The protein is 1-deoxy-D-xylulose 5-phosphate reductoisomerase of Exiguobacterium sibiricum (strain DSM 17290 / CCUG 55495 / CIP 109462 / JCM 13490 / 255-15).